Here is a 142-residue protein sequence, read N- to C-terminus: MVVKALRQISVGQNGVGAFIFPCKKITLQYCNWGGSSQGLRDFLTSKRLAKWAEKYPQIQFEVVAKAGHPVLKAEYINGLNKAICVRNLNVDHVELKLKLLRESSGAQLRHYPKNANVLSLNQSVRGVWSPLHVDPALRHRV.

This sequence belongs to the mitochondrion-specific ribosomal protein mL43 family. Component of the mitochondrial large ribosomal subunit. Mature mitochondrial ribosomes consist of a small (37S) and a large (54S) subunit. The 37S subunit contains at least 33 different proteins and 1 molecule of RNA (15S). The 54S subunit contains at least 45 different proteins and 1 molecule of RNA (21S).

It is found in the mitochondrion. The chain is Large ribosomal subunit protein mL43 (MRPL51) from Eremothecium gossypii (strain ATCC 10895 / CBS 109.51 / FGSC 9923 / NRRL Y-1056) (Yeast).